Consider the following 380-residue polypeptide: Lipid-A-disaccharide synthase (380 aa).

This sequence belongs to the LpxB family.

It carries out the reaction a lipid X + a UDP-2-N,3-O-bis[(3R)-3-hydroxyacyl]-alpha-D-glucosamine = a lipid A disaccharide + UDP + H(+). The protein operates within bacterial outer membrane biogenesis; LPS lipid A biosynthesis. Functionally, condensation of UDP-2,3-diacylglucosamine and 2,3-diacylglucosamine-1-phosphate to form lipid A disaccharide, a precursor of lipid A, a phosphorylated glycolipid that anchors the lipopolysaccharide to the outer membrane of the cell. In Francisella tularensis subsp. tularensis (strain FSC 198), this protein is Lipid-A-disaccharide synthase.